A 388-amino-acid polypeptide reads, in one-letter code: Chorismate synthase (388 aa).

Residues arginine 39 and arginine 45 each contribute to the NADP(+) site. Residues 130 to 132 (RSS), 251 to 252 (NA), glycine 296, 311 to 315 (KPIPT), and arginine 337 each bind FMN.

Belongs to the chorismate synthase family. In terms of assembly, homotetramer. FMNH2 is required as a cofactor.

The enzyme catalyses 5-O-(1-carboxyvinyl)-3-phosphoshikimate = chorismate + phosphate. The protein operates within metabolic intermediate biosynthesis; chorismate biosynthesis; chorismate from D-erythrose 4-phosphate and phosphoenolpyruvate: step 7/7. Catalyzes the anti-1,4-elimination of the C-3 phosphate and the C-6 proR hydrogen from 5-enolpyruvylshikimate-3-phosphate (EPSP) to yield chorismate, which is the branch point compound that serves as the starting substrate for the three terminal pathways of aromatic amino acid biosynthesis. This reaction introduces a second double bond into the aromatic ring system. The protein is Chorismate synthase of Streptococcus pyogenes serotype M1.